A 207-amino-acid polypeptide reads, in one-letter code: Guanylate kinase (207 aa).

The Guanylate kinase-like domain maps to 5–184 (GNLFIVSAPS…ALADLRAIIR (180 aa)). 12–19 (APSGAGKS) is an ATP binding site.

Belongs to the guanylate kinase family.

The protein localises to the cytoplasm. It carries out the reaction GMP + ATP = GDP + ADP. In terms of biological role, essential for recycling GMP and indirectly, cGMP. The polypeptide is Guanylate kinase (Shewanella sp. (strain MR-7)).